The sequence spans 365 residues: 3-dehydroquinate synthase (365 aa).

NAD(+) is bound by residues 69–74 (DGEAHK), 103–107 (GVIGD), 127–128 (TT), Lys-140, Lys-149, and 167–170 (TLNT). 3 residues coordinate Zn(2+): Glu-182, His-245, and His-262.

This sequence belongs to the sugar phosphate cyclases superfamily. Dehydroquinate synthase family. It depends on Co(2+) as a cofactor. The cofactor is Zn(2+). NAD(+) serves as cofactor.

It is found in the cytoplasm. The catalysed reaction is 7-phospho-2-dehydro-3-deoxy-D-arabino-heptonate = 3-dehydroquinate + phosphate. It functions in the pathway metabolic intermediate biosynthesis; chorismate biosynthesis; chorismate from D-erythrose 4-phosphate and phosphoenolpyruvate: step 2/7. Catalyzes the conversion of 3-deoxy-D-arabino-heptulosonate 7-phosphate (DAHP) to dehydroquinate (DHQ). This chain is 3-dehydroquinate synthase, found in Pseudomonas putida (strain W619).